A 260-amino-acid chain; its full sequence is Global transcriptional regulator CodY (260 aa).

Residues 1-159 (MPNLLEKTRK…SSTVVGIQLL (159 aa)) form a GAF domain region. Residues 207–226 (ASVIADRIGITRSVIVNALR) constitute a DNA-binding region (H-T-H motif).

The protein belongs to the CodY family.

The protein resides in the cytoplasm. Its function is as follows. DNA-binding global transcriptional regulator which is involved in the adaptive response to starvation and acts by directly or indirectly controlling the expression of numerous genes in response to nutrient availability. During rapid exponential growth, CodY is highly active and represses genes whose products allow adaptation to nutrient depletion. In Streptococcus equi subsp. equi (strain 4047), this protein is Global transcriptional regulator CodY.